A 1124-amino-acid polypeptide reads, in one-letter code: Tyrosine-protein kinase JAK3 (1124 aa).

The segment at 1 to 223 (MAPPSEETPL…RRTVRRALRR (223 aa)) is interaction with cytokine/interferon/growth hormone receptors. Ser17 carries the post-translational modification Phosphoserine. The FERM domain occupies 24 to 356 (GALHVLLPAR…GYFRLTTDSQ (333 aa)). An SH2; atypical domain is found at 375-475 (QCHGPITLDF…GVAVTLTSCC (101 aa)). One can recognise a Protein kinase 1 domain in the interval 521–781 (LEWHENLGHG…AVIRDLNSLI (261 aa)). At Tyr785 the chain carries Phosphotyrosine; by autocatalysis. Positions 822–1111 (LKYISQLGKG…SRGCETHAFT (290 aa)) constitute a Protein kinase 2 domain. ATP-binding positions include 828 to 836 (LGKGNFGSV) and Lys855. Tyr904 and Tyr939 each carry phosphotyrosine. Residue Asp949 is the Proton acceptor of the active site. Tyr980 and Tyr981 each carry phosphotyrosine; by autocatalysis.

The protein belongs to the protein kinase superfamily. Tyr protein kinase family. JAK subfamily. Interacts with STAM2 and MYO18A. Interacts with SHB. Interacts with CD69. Tyrosine phosphorylated in response to IL-2 and IL-4. Dephosphorylation of Tyr-980 and Tyr-981 by PTPN2 negatively regulates cytokine-mediated signaling. In terms of tissue distribution, in NK cells and an NK-like cell line but not in resting T-cells or in other tissues. The S-form is more commonly seen in hematopoietic lines, whereas the B-form is detected in cells both of hematopoietic and epithelial origins.

The protein resides in the endomembrane system. It localises to the cytoplasm. It carries out the reaction L-tyrosyl-[protein] + ATP = O-phospho-L-tyrosyl-[protein] + ADP + H(+). Its function is as follows. Non-receptor tyrosine kinase involved in various processes such as cell growth, development, or differentiation. Mediates essential signaling events in both innate and adaptive immunity and plays a crucial role in hematopoiesis during T-cells development. In the cytoplasm, plays a pivotal role in signal transduction via its association with type I receptors sharing the common subunit gamma such as IL2R, IL4R, IL7R, IL9R, IL15R and IL21R. Following ligand binding to cell surface receptors, phosphorylates specific tyrosine residues on the cytoplasmic tails of the receptor, creating docking sites for STATs proteins. Subsequently, phosphorylates the STATs proteins once they are recruited to the receptor. Phosphorylated STATs then form homodimer or heterodimers and translocate to the nucleus to activate gene transcription. For example, upon IL2R activation by IL2, JAK1 and JAK3 molecules bind to IL2R beta (IL2RB) and gamma chain (IL2RG) subunits inducing the tyrosine phosphorylation of both receptor subunits on their cytoplasmic domain. Then, STAT5A and STAT5B are recruited, phosphorylated and activated by JAK1 and JAK3. Once activated, dimerized STAT5 translocates to the nucleus and promotes the transcription of specific target genes in a cytokine-specific fashion. The polypeptide is Tyrosine-protein kinase JAK3 (Homo sapiens (Human)).